A 465-amino-acid polypeptide reads, in one-letter code: Gamma-aminobutyric acid receptor subunit rho-2 (465 aa).

Residues 1–20 (MPYFMRLALFLFCLMALVES) form the signal peptide. Residues 21–260 (RKPRRKRWTG…LYINFTLRRH (240 aa)) lie on the Extracellular side of the membrane. Arginine 105 contributes to the 4-aminobutanoate binding site. The N-linked (GlcNAc...) asparagine glycan is linked to asparagine 120. Serine 169 serves as a coordination point for 4-aminobutanoate. Cysteine 178 and cysteine 192 form a disulfide bridge. Glutamate 197 provides a ligand contact to 4-aminobutanoate. N-linked (GlcNAc...) asparagine glycosylation occurs at asparagine 254. Residues 261 to 281 (IFFFLLQTYFPATLMVMLSWV) traverse the membrane as a helical segment. Over 282–293 (SFWIDHRAVPAR) the chain is Cytoplasmic. A helical transmembrane segment spans residues 294–314 (VSLGIMTVLTMSTIITGVNAS). Residues 315-325 (MPRVSYIRAVD) lie on the Extracellular side of the membrane. The chain crosses the membrane as a helical span at residues 326–346 (IYLWVSFVFVFLSVLEYAAVN). Residues 347–443 (YLTTVQEQKE…IFQNTHAIDK (97 aa)) are Cytoplasmic-facing. Residues 444 to 464 (YSRLIFPAFYIVFNLIYWSVF) form a helical membrane-spanning segment. Residue serine 465 is a topological domain, extracellular.

Belongs to the ligand-gated ion channel (TC 1.A.9) family. Gamma-aminobutyric acid receptor (TC 1.A.9.5) subfamily. GABRR2 sub-subfamily. As to quaternary structure, three rho subunits (rho-1/GBRR1, rho-2/GBRR2 and rho-3/GBRR3) coassemble either to form functional homopentamers or heteropentamers. Rho-2 is unable to form a functional homopentamer. Interacts with SQSTM1. Expressed in spinal cord and in cerebellum. Expressed in retina.

Its subcellular location is the postsynaptic cell membrane. It localises to the cell membrane. It catalyses the reaction chloride(in) = chloride(out). In contrast with rho-1 and rho-3 homopentamers, rho-2 GABAARs are not inhibited by picrotoxin. Rho subunit of the pentameric ligand-gated chloride channels responsible for mediating the effects of gamma-aminobutyric acid (GABA), the major inhibitory neurotransmitter in the brain. Rho-containing GABA-gated chloride channels are a subclass of GABA(A) receptors (GABAARs) entirely composed of rho subunits, where GABA molecules bind at the rho intersubunit interfaces. When activated by GABA, rho-GABAARs selectively allow the flow of chloride anions across the cell membrane down their electrochemical gradient. Rho-2 GABAARs may contribute to the regulation of glial development in the cerebellum by controlling extrasynaptic transmission. Rho-2 GABAARs are also involved in neuronal tonic (extrasynaptic) and phasic (synaptic) transmission in the Purkinje neurons of the cerebellum. Rho-2 GABAARs expressed in retina may play a role in retinal neurotransmission. The protein is Gamma-aminobutyric acid receptor subunit rho-2 of Rattus norvegicus (Rat).